Here is a 33-residue protein sequence, read N- to C-terminus: Brevinin-2PTe (33 aa).

An intrachain disulfide couples Cys-27 to Cys-33.

In terms of tissue distribution, expressed by the skin glands.

It localises to the secreted. Its function is as follows. Has antibacterial activity against the Gram-positive bacterium S.aureus ATCC 25923 (MIC=36 uM) and the Gram-negative bacterium E.coli ATCC 25726 (MIC=18 uM). This chain is Brevinin-2PTe, found in Pulchrana picturata (Malaysian fire frog).